A 375-amino-acid chain; its full sequence is FAD-dependent catabolic D-arginine dehydrogenase DauA (375 aa).

FAD-binding positions include Ala14, 32–33 (ER), 41–48 (STGRSAAH), Ala171, and 331–336 (GGYGIQ).

This sequence belongs to the FAD-dependent glycerol-3-phosphate dehydrogenase family. Monomer. The cofactor is FAD.

The catalysed reaction is D-arginine + A + H2O = 5-guanidino-2-oxopentanoate + AH2 + NH4(+). It catalyses the reaction a D-alpha-amino acid + A + H2O = a 2-oxocarboxylate + AH2 + NH4(+). Its activity is regulated as follows. Inhibited by D-arginine and D-lysine at high concentration. In terms of biological role, dauA is highly expressed within the cystic fibrosis (CF) lung, and it is required for virulence via the optimal production of hydrogen cyanide, pyocyanine, pyoverdine, rhamnolipid and alginate during biofilm formation. Involved in the catabolism of D-lysine and D-arginine. Under aerobic conditions, the arginine succinyltransferase (AST) and arginine transaminase (ATA) pathways are 2 major routes for L-arginine utilization as the sole source of carbon and nitrogen. The D-to-L racemization of arginine by DauA and DauB is necessary, before to be channeled into the AST and/or ATA pathways. DauA catalyzes the flavin-dependent oxidative deamination of D-arginine into 2-ketoarginine (2-KA) and ammonia. It also has dehydrogenase activity towards D-lysine, D-tyrosine, D-methionine, D-phenylalanine, D-ornithine, D-histidine and D-leucine as substrates. This chain is FAD-dependent catabolic D-arginine dehydrogenase DauA, found in Pseudomonas aeruginosa (strain ATCC 15692 / DSM 22644 / CIP 104116 / JCM 14847 / LMG 12228 / 1C / PRS 101 / PAO1).